A 347-amino-acid chain; its full sequence is Acetylglutamate kinase, chloroplastic (347 aa).

A chloroplast-targeting transit peptide spans 1–50; the sequence is MATVTSNASPKSFSFTVSNPFKTLIPNKSPSLCYPTRNKNHHRLGFSIKA. T51 is subject to N-acetylthreonine. Residue 94–95 participates in ATP binding; it reads GA. N-acetyl-L-glutamate is bound by residues G126, R148, and 242 to 245; that span reads NINA. Position 260 (K260) interacts with L-arginine. Residues 265 to 266 and L271 contribute to the ATP site; that span reads TD. An L-arginine-binding site is contributed by K282. Residue 297–305 coordinates ATP; the sequence is KVAGGMIPK. Residues 334–337 and G342 contribute to the L-arginine site; that span reads EIMS.

The protein belongs to the acetylglutamate kinase family. ArgB subfamily. Interacts with GLB1. Interaction is dependent of MgATP and inhibited by 2-oxoglutarate, arginine, glutamate, citrate, and oxaloacetate.

Its subcellular location is the plastid. The protein resides in the chloroplast stroma. It catalyses the reaction N-acetyl-L-glutamate + ATP = N-acetyl-L-glutamyl 5-phosphate + ADP. Its pathway is amino-acid biosynthesis; L-arginine biosynthesis; N(2)-acetyl-L-ornithine from L-glutamate: step 2/4. Its activity is regulated as follows. Inhibited by arginine. Inhibition is relieved by binding to GLB1. Functionally, involved in the arginine biosynthetic pathway via the intermediate compound ornithine. The chain is Acetylglutamate kinase, chloroplastic from Arabidopsis thaliana (Mouse-ear cress).